Consider the following 1484-residue polypeptide: MYSEWRSLHLVIQNDQGHTSVLHSYPESVGREVANAVVRPLGQALGHSPVSASQSLLYTDKDVKWTMEVICYGLTLPLDGETVKYCVDVYTDWIMALVLPKDSIPLPVIKEPNLYIQSILKHLQNLFVPRQEQGSSQIRLCLQVLRAIQKLARESSIMARETWEVLLLFLLQINDILLAPPTVQGGIAENLAEKLIGVLFEVWLLACTRCFPTPPYWKTAKEMVANWRHHPAVVEQWSKVICALTSRLLRFTYGPSFPPFKVPDEDANLIPPEMDNECIAQTWFRFLHMLSNPVDLSNPAVISSTPKFQEQFLNVSGMPQELSQYPCLKHLPQIFFRAMRGISCLVDAFLGISRPRSDSAPPTPVNRLSMPQSAAVNTTPPHNRRHRAVTVNKATMKTSTVTTAHTSKVQHQASSTSPLSSPNQTSSEPRPLPAPRRPKVNSILNLFGSWLFDAAFVHCKLHNGINRDSSMTASFIQILLSYKSSIATQASMEFRRKGSQMSTDTMVSNPVFDASEFPDNYEAGRAEACGTLCRIFCSKKTGEEILPAYLSSVILNSPPLFCCDLKGIDVVVPYFISALETILPDRELSKFKSYVNPTELRRSSINILLSLLPLPHHFGTVRSEVVLEGKFSNDDSSSYDKPITFLSLKLRLVNILIGALQTETDPNNTQMILGAMLNIVQDSALLEALGCQMEMGGGENNLKSHSRTNSGISSASGGSTEPTTPDSERPAQALLRDYGSTDSAAGLLIRSIHLVTQRLNSQWRQDMSISLAALELLSGLAKVKVMVDLGDRKRAISSVCSYIVYQCSRPAPLHSRDLHSMIVAAFQCLCVWLTEHPDMLDEKDCLKEVLEIVELGISGSKSKNSEQEVKYKGDKEPNPASMRVKDAAEATLTCIMQLLGAFPSPSGPASPCSLVNETTLIKYSRLPTINKHSFRYFVLDNSVILAMLEQPLGNEQNDFFPSVTVLVRGMSGRLAWAQQLCLLPRGAKANQKLFVPEPRPVPKNDVGFKYSVKHRPFPEEVDKIPFVKADLSIPDLHEIVTEELEERHEKLRSGMAQQIAYEMHLEQQSEGELQKRSFPDPVTDCKPPPPAQEFQTARLFLSHFGFLSLEALKEPANSRLPPHLIALDSTIPGFFDDIGYLDLLPCRPFDTVFIFYMKPGQKTNQEILKNVESSRNVQPHFLEFLLSLGWSVDVGRHPGWTGHVSTSWSINSCDDGEGSEQDEVTSSEDVGASIFNGQKKVLYYADALTEIAFVVPSPVESLTDSLESNISDQDSDSNMDLMPGILKQPPLTLELVPNHTDSLNSSQRLSPSSRMKKLPQGRPVPPLGPETRVSVVWVERYDDIENFPLSDLMTEISTGVETTANSSTSLRSTTLEKEVPVIFIHPLNTGLFRIKIQGATGKFNMVIPLVDGMIVSRRALGFLVRQTVINICRRKRLESDSYSPPHVRRKQKITDIVNKYRNKQLEPEFYTALFQEVGLKNCSS.

Disordered stretches follow at residues 355–437 and 697–728; these read PRSD…APRR and GGEN…PDSE. A Phosphoserine modification is found at Ser359. 2 positions are modified to phosphothreonine: Thr363 and Thr379. Composition is skewed to polar residues over residues 369–381, 392–428, and 701–725; these read SMPQ…TTPP, NKAT…TSSE, and NLKS…PTTP. A phosphoserine mark is found at Ser421 and Ser710. The residue at position 724 (Thr724) is a Phosphothreonine. Residues 1138–1382 enclose the Rap-GAP domain; sequence IGYLDLLPCR…TTLEKEVPVI (245 aa). The residue at position 1275 (Ser1275) is a Phosphoserine. The segment at 1301–1325 is disordered; that stretch reads DSLNSSQRLSPSSRMKKLPQGRPVP. Positions 1302-1313 are enriched in low complexity; that stretch reads SLNSSQRLSPSS.

Component of the heterodimeric RalGAP1 complex with RALGAPA1 and of the heterodimeric RalGAP2 complex with RALGAPA2. Heterodimerization is required for activity. As to expression, detected in brain, thymus, lung, heart, spleen, liver and testis (at protein level).

Non-catalytic subunit of the heterodimeric RalGAP1 and RalGAP2 complexes which act as GTPase activators for the Ras-like small GTPases RALA and RALB. The protein is Ral GTPase-activating protein subunit beta of Rattus norvegicus (Rat).